Consider the following 466-residue polypeptide: Ras-GEF domain-containing family member 1C (466 aa).

The segment at 1–37 is disordered; sequence MPQTLSASDMVTPGSLSPPPTEPTDGEQAGQPLLDGA. The N-terminal Ras-GEF domain occupies 34 to 164; it reads LDGAPSSASL…LLQALHQKLA (131 aa). The Ras-GEF domain maps to 200 to 446; that stretch reads DPYTLAQQLT…YLASYESESP (247 aa).

Functionally, guanine nucleotide exchange factor (GEF). In Homo sapiens (Human), this protein is Ras-GEF domain-containing family member 1C (RASGEF1C).